A 480-amino-acid polypeptide reads, in one-letter code: Probable histone deacetylase 1-B (480 aa).

Residues 10–321 (KVCYYYDGDV…WTYETAVALD (312 aa)) are histone deacetylase. The active site involves H141. A disordered region spans residues 387-480 (DSVHDDSGEE…KRVKEETKSV (94 aa)). Over residues 401 to 416 (PDKRISIRSSDKRIAC) the composition is skewed to basic and acidic residues. The segment covering 417–427 (DEEFSDSEDEG) has biased composition (acidic residues). Residues 443–480 (VKTEEEKEGEDKKDVKEEEKAKDEKTDSKRVKEETKSV) are compositionally biased toward basic and acidic residues.

This sequence belongs to the histone deacetylase family. HD type 1 subfamily. Found in a large complex with RBBP4 and MI-2.

It localises to the nucleus. The protein resides in the cytoplasm. It carries out the reaction N(6)-acetyl-L-lysyl-[histone] + H2O = L-lysyl-[histone] + acetate. The enzyme catalyses N(6)-acetyl-L-lysyl-[protein] + H2O = L-lysyl-[protein] + acetate. The catalysed reaction is N(6)-(2E)-butenoyl-L-lysyl-[protein] + H2O = (2E)-2-butenoate + L-lysyl-[protein]. In terms of biological role, histone deacetylase that catalyzes the deacetylation of lysine residues on the N-terminal part of the core histones (H2A, H2B, H3 and H4). Histone deacetylation gives a tag for epigenetic repression and plays an important role in transcriptional regulation, cell cycle progression and developmental events. Histone deacetylases act via the formation of large multiprotein complexes. Also functions as a deacetylase for non-histone proteins. In addition to protein deacetylase activity, also has protein-lysine deacylase activity: acts as a protein decrotonylase by mediating decrotonylation ((2E)-butenoyl) of histones. In Xenopus laevis (African clawed frog), this protein is Probable histone deacetylase 1-B (hdac1-b).